A 217-amino-acid chain; its full sequence is Small ribosomal subunit protein uS3 (217 aa).

Positions 38-106 (IRKFIQKELA…QVHINIIEIK (69 aa)) constitute a KH type-2 domain.

It belongs to the universal ribosomal protein uS3 family. As to quaternary structure, part of the 30S ribosomal subunit. Forms a tight complex with proteins S10 and S14.

Functionally, binds the lower part of the 30S subunit head. Binds mRNA in the 70S ribosome, positioning it for translation. This chain is Small ribosomal subunit protein uS3, found in Streptococcus uberis (strain ATCC BAA-854 / 0140J).